Consider the following 553-residue polypeptide: Putative transport protein ASA_0825 (553 aa).

The next 5 membrane-spanning stretches (helical) occupy residues 4–24 (IALSISMLSLVAVLGLWLGNW), 29–49 (VGLGIGGVLFGGIIVGHFAGV), 65–85 (FGLILFVYTIGIQVGPGFFSS), 95–115 (GFAALLVILGCVVAAGLHQLF), and 158–178 (MGYAVAYPFGICGILLTMWLV). RCK C-terminal domains follow at residues 191-276 (DLFE…VLGE) and 279-361 (ETSL…VVGN). 6 consecutive transmembrane segments (helical) span residues 371 to 391 (MLPVFIGIGLGVLLGSIPFYL), 403 to 425 (AGGPLVVALILSRIGSIGKLYWF), 439 to 459 (IVLFLAVVGFKSGAGFVDTLI), 465 to 485 (AWMMYGMAITLIPLLVVGVLA), 493 to 513 (YLTLCGLLAGSMTDPPALAFA), and 533 to 553 (LVMFLRIISPQLLAILLWAGV).

This sequence belongs to the AAE transporter (TC 2.A.81) family. YidE subfamily.

The protein resides in the cell membrane. This Aeromonas salmonicida (strain A449) protein is Putative transport protein ASA_0825.